A 223-amino-acid chain; its full sequence is MVRVKICGIRDWEEARMVLDAGVDTLGFVFARSPRAIKPEAAREIITKLPPFTTTVGVFVNEPRYSLMEIASFCRLDVLQLHGDEPPEYCHGLSQRLIKAIRVRDAASLASLEAYREVQGFLLDAWVPGKAGGTGTTFNWELVRGAATGGKPVILAGGLTPENVGAAIQLVHPYAVDVSSGVEVDGRKNPARIAAFLEAVRKAEEHHVRPTASSCCTGLKGDF.

It belongs to the TrpF family.

It catalyses the reaction N-(5-phospho-beta-D-ribosyl)anthranilate = 1-(2-carboxyphenylamino)-1-deoxy-D-ribulose 5-phosphate. It participates in amino-acid biosynthesis; L-tryptophan biosynthesis; L-tryptophan from chorismate: step 3/5. The protein is N-(5'-phosphoribosyl)anthranilate isomerase of Moorella thermoacetica (strain ATCC 39073 / JCM 9320).